The primary structure comprises 373 residues: Alpha-ketoglutarate dependent kainoid synthase (373 aa).

The 117-residue stretch at 204–320 (TINSKKMFFT…RSSLITFYEP (117 aa)) folds into the Fe2OG dioxygenase domain. Fe cation-binding residues include histidine 235, aspartate 237, and histidine 296. 2-oxoglutarate is bound at residue arginine 311.

This sequence belongs to the iron/ascorbate-dependent oxidoreductase family. The cofactor is Fe(2+).

It catalyses the reaction N-(7'-carboxy-7'-demethylgeranyl)-L-glutamate + 2-oxoglutarate + O2 = isodomoate A + succinate + CO2 + H2O. The enzyme catalyses N-geranyl-L-glutamate + 2-oxoglutarate + O2 = dainate A + succinate + CO2 + H2O. The protein operates within secondary metabolite biosynthesis. Iron/ascorbate-dependent oxidoreductase: part of the gene cluster that mediates the biosynthesis of domoic acid (DA) and derivatives, natural products with neurochemical activity acting as ionotropic glutamate receptor (iGluR) agonists, thus being neurotoxins causing amnesic shellfish poisoning (ASP). Catalyzes the conversion of 7'-N-carboxy-L-geranyl-L-glutamic acid (cNGG) to isodomoic acid-A. Also mediates the conversion of N-geranyl-L-glutamic acid (L-NGG) to dainic acid A. This Pseudo-nitzschia multiseries (Marine planktonic diatom) protein is Alpha-ketoglutarate dependent kainoid synthase.